We begin with the raw amino-acid sequence, 656 residues long: Kinesin-related protein SMY1 (656 aa).

Positions 27-364 (HIEVILRAIP…LEFGDSIRQI (338 aa)) constitute a Kinesin motor domain. 114-121 (GPSFSGKS) is an ATP binding site. A Phosphothreonine modification is found at threonine 583.

The protein belongs to the TRAFAC class myosin-kinesin ATPase superfamily. Kinesin family.

The protein resides in the cytoplasm. It localises to the cytoskeleton. Its function is as follows. Possible microtubule-based motor that can interact or substitute with myosin 2 (MYO2). This chain is Kinesin-related protein SMY1 (SMY1), found in Saccharomyces cerevisiae (strain ATCC 204508 / S288c) (Baker's yeast).